Here is a 264-residue protein sequence, read N- to C-terminus: Movement protein (264 aa).

Residues 210–219 are compositionally biased toward basic residues; it reads FRTKPSKRGP. The segment at 210–264 is disordered; the sequence is FRTKPSKRGPKNNNNLGKGRSGGRPKPKSFDEVEKEFDNLIEDEAETSVADSDSY. The segment covering 237–247 has biased composition (basic and acidic residues); it reads KSFDEVEKEFD.

The protein belongs to the tobamovirus movement protein family. As to quaternary structure, binds to host RBCS at the plasmodesmata; this interaction seems required for viral systemic movement. In resistant plants, interacts with host MBP2C at host microtubules; this interaction prevents virus cell to cell movement. In resistant plants, interacts with host resistance (R) protein (e.g. tomato ToMV resistance protein TM-2(2), AC Q71BG9) at the host plasma membrane; this interaction triggers host defense responses leading to programmed cell death.

It is found in the host cytoplasm. It localises to the host cytoskeleton. Its subcellular location is the host cell junction. The protein resides in the host plasmodesma. Functionally, transports viral genome to neighboring plant cells directly through plasmosdesmata, without any budding. The movement protein allows efficient cell to cell propagation, by bypassing the host cell wall barrier. Forms a ribonucleoprotein complex with viral RNA. Binds microtubules and modulates microtubule stability. Can bind double-stranded DNA. Triggers host hypersensitive defense reaction in incompatible plants harboring resistance (R) proteins. The protein is Movement protein (MP) of Tomato mosaic virus (strain LII) (ToMV).